The chain runs to 296 residues: Cytidine deaminase (296 aa).

CMP/dCMP-type deaminase domains follow at residues 47–167 and 186–296; these read TEAE…FGPK and DSSD…VDPV. Substrate is bound at residue 88 to 90; the sequence is NLE. Zn(2+) is bound at residue His101. The active-site Proton donor is the Glu103. Zn(2+)-binding residues include Cys128 and Cys131.

It belongs to the cytidine and deoxycytidylate deaminase family. As to quaternary structure, homodimer. Requires Zn(2+) as cofactor.

The enzyme catalyses cytidine + H2O + H(+) = uridine + NH4(+). It catalyses the reaction 2'-deoxycytidine + H2O + H(+) = 2'-deoxyuridine + NH4(+). This enzyme scavenges exogenous and endogenous cytidine and 2'-deoxycytidine for UMP synthesis. This chain is Cytidine deaminase, found in Shewanella sp. (strain MR-4).